The sequence spans 71 residues: Exodeoxyribonuclease 7 small subunit (71 aa).

This sequence belongs to the XseB family. Heterooligomer composed of large and small subunits.

The protein resides in the cytoplasm. It carries out the reaction Exonucleolytic cleavage in either 5'- to 3'- or 3'- to 5'-direction to yield nucleoside 5'-phosphates.. Bidirectionally degrades single-stranded DNA into large acid-insoluble oligonucleotides, which are then degraded further into small acid-soluble oligonucleotides. This Clostridium botulinum (strain ATCC 19397 / Type A) protein is Exodeoxyribonuclease 7 small subunit.